The following is a 106-amino-acid chain: MYISRNMEQWNEFLDLMRKAFEQGKEQELLTLLLTADERDAVALRVQIVSQLLDKSLAQREIQQILNTSAATITRGSNMIKIMPPEFMDWVKQQLNHNNKNELGSD.

Residues 59–82 (QREIQQILNTSAATITRGSNMIKI) mediate DNA binding.

This sequence belongs to the TrpR family. In terms of assembly, homodimer.

It localises to the cytoplasm. In terms of biological role, this protein is an aporepressor. When complexed with L-tryptophan it binds the operator region of the trp operon and prevents the initiation of transcription. This is Trp operon repressor homolog from Histophilus somni (strain 129Pt) (Haemophilus somnus).